Consider the following 238-residue polypeptide: Dolichyldiphosphatase 1 (238 aa).

The next 4 membrane-spanning stretches (helical) occupy residues 33–53, 100–120, 130–150, and 162–182; these read LAYLSLSPIFVVVGFLTLIIF, PSSHSQFMWFFSVYSFLFLYL, FLDLLWRHVLSLGLLTAAFLV, and WSQVFYGGVAGSLMAVAWFII.

This sequence belongs to the dolichyldiphosphatase family. In terms of tissue distribution, widely expressed with highest levels in brain, kidney, lung and intestine.

The protein localises to the endoplasmic reticulum membrane. It catalyses the reaction a di-trans,poly-cis-dolichyl diphosphate + H2O = a di-trans,poly-cis-dolichyl phosphate + phosphate + H(+). It functions in the pathway protein modification; protein glycosylation. Required for efficient N-glycosylation. Necessary for maintaining optimal levels of dolichol-linked oligosaccharides. Hydrolyzes dolichyl pyrophosphate at a very high rate and dolichyl monophosphate at a much lower rate. Does not act on phosphatidate. The protein is Dolichyldiphosphatase 1 (Dolpp1) of Mus musculus (Mouse).